Here is a 436-residue protein sequence, read N- to C-terminus: GTPase Der (436 aa).

EngA-type G domains follow at residues 4 to 167 (PVVA…PKDA) and 175 to 351 (IKFS…DNHE). Residues 10 to 17 (GRPNVGKS), 57 to 61 (DTGGI), 119 to 122 (NKVD), 181 to 188 (GRPNVGKS), 229 to 233 (DTAGI), and 294 to 297 (NKWD) contribute to the GTP site. Positions 352 to 436 (QRISSAVLND…PIHIIERRRK (85 aa)) constitute a KH-like domain.

This sequence belongs to the TRAFAC class TrmE-Era-EngA-EngB-Septin-like GTPase superfamily. EngA (Der) GTPase family. Associates with the 50S ribosomal subunit.

GTPase that plays an essential role in the late steps of ribosome biogenesis. This is GTPase Der from Ligilactobacillus salivarius (strain UCC118) (Lactobacillus salivarius).